Here is a 630-residue protein sequence, read N- to C-terminus: Internalin B (630 aa).

Residues 1–30 (MKEKHNPRRKYCLISGLAIIFSLWIIIGNG) form the signal peptide. The LRRNT domain maps to 31-76 (AKVQAETITVPTPIKQIFSDDAFAETIKDNLKKKSVTDAVTQNELN). LRR repeat units lie at residues 75–97 (LNSI…IQYL), 98–121 (PNVT…NLKN), 123–141 (GWLF…LKDL), 142–163 (KKLK…LVHL), 164–187 (PQLE…RLTK), 189–207 (DTLS…LAGL), and 208–231 (TKLQ…GLKN). An ig-like region region spans residues 241 to 319 (ECLNKPINHQ…RFHGRVTQPL (79 aa)). One can recognise an LRRCT domain in the interval 241 to 330 (ECLNKPINHQ…EVYTVSYDVD (90 aa)). The tract at residues 320-392 (KEVYTVSYDV…TLYAVFKAET (73 aa)) is b repeat region. GW domains lie at 393 to 467 (TEKA…LDRY), 472 to 550 (YDKG…TFYK), and 553 to 630 (MEKP…RAQK). Residues 399 to 630 (LTRYVKYIRG…TKAANLRAQK (232 aa)) form a GW repeat region, necessary and sufficient for cell surface attachment, interacts with host C1QBP and with heparin region.

Belongs to the internalin family. Interacts via its LRR repeats plus the Ig-like region with the extracellular portion (residues 25-741) of its receptor MET; MET can bind HGF, its endogenous ligand, and InlB simultaneously. Probably forms a dimer upon interaction with host MET, which subsequently allows dimerization of the host MET and subsequent host signaling; dimerization probably occurs via the convex surface of InlB. Prevention of dimerization does not block interaction with MET but prevents downstream action.

Its subcellular location is the secreted. The protein resides in the cytoplasm. It localises to the cell membrane. Mediates the entry of L.monocytogenes into normally non-phagocytic mammalian host cells. Its host receptor is hepatocyte growth factor receptor (HGF receptor, a tyrosine kinase, MET) which is tyrosine-phosphorylated in response to InlB. Downstream targets MAPK1/MAPK3 (Erk1/2) and AKT are phosphorylated in response to InlB, which also causes cell colony scattering. Complement component 1 Q subcomponent-binding protein (gC1q-R, C1QBP) has been suggested to also act an InlB receptor, but this is less certain. Stimulation of Tyr-phosphorylation of MET by InlB is potentiated by the InlB GW domains and glycosaminoglycans such as heparin. This Listeria monocytogenes serovar 1/2a (strain ATCC BAA-679 / EGD-e) protein is Internalin B (inlB).